Here is a 288-residue protein sequence, read N- to C-terminus: ATP synthase gamma chain (288 aa).

This sequence belongs to the ATPase gamma chain family. In terms of assembly, F-type ATPases have 2 components, CF(1) - the catalytic core - and CF(0) - the membrane proton channel. CF(1) has five subunits: alpha(3), beta(3), gamma(1), delta(1), epsilon(1). CF(0) has three main subunits: a, b and c.

The protein localises to the cell inner membrane. Functionally, produces ATP from ADP in the presence of a proton gradient across the membrane. The gamma chain is believed to be important in regulating ATPase activity and the flow of protons through the CF(0) complex. In Rickettsia typhi (strain ATCC VR-144 / Wilmington), this protein is ATP synthase gamma chain.